Reading from the N-terminus, the 396-residue chain is NDP-glycosyltransferase YjiC (396 aa).

UDP is bound by residues N18, T234, V283, H298, and 302-306; that span reads NSTME.

Belongs to the UDP-glycosyltransferase family.

It carries out the reaction an NDP-glycose + an acceptor = a glycosylated acceptor + NDP.. Functionally, glycosyltransferase that can glycosylate a wide range of substrates, including various flavonoids (flavones, flavonols, flavanones, flavanols, chalcones), isoflavonoids and stilbenes, to produce multiple glycosylated products. It can accept diverse nucleotide diphosphate-D/L-sugars as donors, including ADP-, GDP-, CDP-, TDP- or UDP-alpha-D-glucose, and catalyzes O-, N-, or S-glycosylation. In vitro, catalyzes the glycosylation of, among others, apigenin, 3-hydroxyflavone, phloretin or resveratrol, resulting in multiple glucosylated products, along with mono-, di-, tri- and tetraglucosides. Can also catalyze the glycosylation of the macrolide epothilone A with diverse NDP-D/L-sugars, forming different epothilone A glycoside derivatives. This chain is NDP-glycosyltransferase YjiC, found in Bacillus licheniformis (strain ATCC 14580 / DSM 13 / JCM 2505 / CCUG 7422 / NBRC 12200 / NCIMB 9375 / NCTC 10341 / NRRL NRS-1264 / Gibson 46).